A 1035-amino-acid chain; its full sequence is POM121-like protein 2 (1035 aa).

6 disordered regions span residues Met1 to Gln37, Leu177 to Gly213, Ile286 to Ala343, Leu415 to Leu508, Ser754 to Leu791, and Asn972 to Lys1035. The segment covering Thr27–Gln37 has biased composition (basic residues). The segment covering Gly309–Gln319 has biased composition (low complexity). 3 stretches are compositionally biased toward polar residues: residues Lys320–Asn330, Ser420–Ala431, and Gly445–Thr462. Positions Thr464–Thr481 are enriched in low complexity. Over residues Pro493–Pro502 the composition is skewed to pro residues. The segment covering Arg1000–Ser1016 has biased composition (low complexity). Residues Lys1017–Lys1035 are compositionally biased toward basic residues.

The protein belongs to the POM121 family.

This is POM121-like protein 2 (POM121L2) from Homo sapiens (Human).